A 425-amino-acid chain; its full sequence is ADP-ribose glycohydrolase MACROD2 (425 aa).

The Macro domain occupies 59 to 240; it reads QETSQVKKSL…IYKKKMNEFF (182 aa). Residues 77 to 79, 90 to 92, and 97 to 102 each bind substrate; these read GDI, AAN, and GGGGVD. Lys170 is covalently cross-linked (Glycyl lysine isopeptide (Lys-Gly) (interchain with G-Cter in ubiquitin)). Residues 185–191 and Phe224 each bind substrate; that span reads ISTGIYG. A disordered region spans residues 243–425; sequence DDNNEEEEDV…EAKEQRNGTK (183 aa). Residues 244 to 262 are compositionally biased toward acidic residues; that stretch reads DNNEEEEDVEMKEDSDENG. Positions 302–343 are enriched in basic and acidic residues; it reads EDFAKDENITKGGEVTDHSVRDQDHPDGQENDSTKNEIKIET. Polar residues predominate over residues 344 to 360; sequence ESQSSYMETEELSSNQE. 2 stretches are compositionally biased toward basic and acidic residues: residues 381–391 and 415–425; these read EGEKAPGEDTP and DEAKEQRNGTK.

Belongs to the MacroD-type family. MacroD1/2-like subfamily. In terms of assembly, interacts with ADP-ribosylated PARP1.

It localises to the nucleus. The catalysed reaction is 2''-O-acetyl-ADP-D-ribose + H2O = ADP-D-ribose + acetate + H(+). It catalyses the reaction 4-O-(ADP-D-ribosyl)-L-aspartyl-[protein] + H2O = L-aspartyl-[protein] + ADP-D-ribose + H(+). The enzyme catalyses 5-O-(ADP-D-ribosyl)-L-glutamyl-[protein] + H2O = L-glutamyl-[protein] + ADP-D-ribose + H(+). It carries out the reaction alpha-NAD(+) + H2O = ADP-D-ribose + nicotinamide + H(+). Its activity is regulated as follows. Subject to product inhibition by ADP-ribose. In terms of biological role, removes ADP-ribose from aspartate and glutamate residues in proteins bearing a single ADP-ribose moiety. Inactive towards proteins bearing poly-ADP-ribose. Deacetylates O-acetyl-ADP ribose, a signaling molecule generated by the deacetylation of acetylated lysine residues in histones and other proteins. The polypeptide is ADP-ribose glycohydrolase MACROD2 (Homo sapiens (Human)).